The primary structure comprises 1409 residues: Receptor-type tyrosine-protein phosphatase (1409 aa).

Residues 1–22 form the signal peptide; it reads MRINRWIWWATVILLYLRTGLA. The Extracellular portion of the chain corresponds to 23 to 712; sequence ADFFRSSEEN…LLDTESSSSG (690 aa). The tract at residues 32–53 is disordered; sequence NDRKSSDDLDNFNSTKIEPDKP. The region spanning 159 to 267 is the Ig-like C2-type domain; sequence PTKCDKRDLA…TASASDLDVT (109 aa). C189 and C255 are joined by a disulfide. Fibronectin type-III domains follow at residues 276 to 366 and 372 to 502; these read APRQ…TKQK and KEED…AQPD. The chain crosses the membrane as a helical span at residues 713-733; that stretch reads FGIFMKIILPFLLFLAFATGV. The Cytoplasmic segment spans residues 734 to 1409; that stretch reads TMFFVNRKGH…LADYISKTYR (676 aa). Tyrosine-protein phosphatase domains follow at residues 793 to 1072 and 1135 to 1403; these read FAQE…LAEW and LEEE…LADY. Active-site phosphocysteine intermediate residues include C1013 and C1344.

The protein belongs to the protein-tyrosine phosphatase family. Receptor class 2A subfamily. Expressed in muscles, hypodermis and a subset of neurons. Expressed in the AVA neurons, with high expression in the anterior half of the preanal ganglion where AVA neurons contact the PHB neurons.

It is found in the cell membrane. It localises to the synapse. The enzyme catalyses O-phospho-L-tyrosyl-[protein] + H2O = L-tyrosyl-[protein] + phosphate. Its function is as follows. Possesses an intrinsic protein tyrosine phosphatase (PTPase) activity. Regulates egl-15 activity which is required for hypodermis-mediated fluid homeostasis and protein degradation in muscle. During the formation of neuromuscular junctions at the larval stage, negatively regulates membrane protrusion from body wall muscles. Plays a role in nicotinic acetylcholine receptor (nAChR)-mediated sensitivity to nicotine. Regulates synaptic levels of nAchR subunit lev-1 in the nerve cord. Promotes the outgrowth of the quaternary dendritic branches of the PVD sensory neurons. In parallel to the sax-7/mnr-1 pathway, also controls the extension of the PVD primary branches. Acts in the netrin/DCC pathway to mediate the formation of synapses between the AVA interneurons and the PHB sensory neurons. Also required for the formation of synapses between the AVA interneurons and the VA10 motor neurons. The sequence is that of Receptor-type tyrosine-protein phosphatase from Caenorhabditis elegans.